We begin with the raw amino-acid sequence, 340 residues long: Dual specificity protein phosphatase 12 (340 aa).

Met-1 is modified (N-acetylmethionine). Residues 26–171 enclose the Tyrosine-protein phosphatase domain; it reads QMLEVQPGLY…LKLYQAMGYE (146 aa). Catalysis depends on Cys-115, which acts as the Phosphocysteine intermediate. 116–121 is a substrate binding site; it reads HAGVSR. At Ser-335 the chain carries Phosphoserine.

Belongs to the protein-tyrosine phosphatase family. Non-receptor class dual specificity subfamily. As to quaternary structure, monomer. Requires Zn(2+) as cofactor. As to expression, ubiquitous, highest expression in spleen, testis, ovary, and peripheral blood leukocytes and lower expression in liver and lung.

Its subcellular location is the nucleus. It is found in the cytoplasm. The protein resides in the cytosol. The catalysed reaction is O-phospho-L-tyrosyl-[protein] + H2O = L-tyrosyl-[protein] + phosphate. The enzyme catalyses O-phospho-L-seryl-[protein] + H2O = L-seryl-[protein] + phosphate. It catalyses the reaction O-phospho-L-threonyl-[protein] + H2O = L-threonyl-[protein] + phosphate. Functionally, dual specificity phosphatase; can dephosphorylate both phosphotyrosine and phosphoserine or phosphothreonine residues. Can dephosphorylate glucokinase (in vitro). Has phosphatase activity with the synthetic substrate 6,8-difluoro-4-methylumbelliferyl phosphate and other in vitro substrates. This chain is Dual specificity protein phosphatase 12 (DUSP12), found in Homo sapiens (Human).